We begin with the raw amino-acid sequence, 265 residues long: Proteasome subunit alpha (265 aa).

The tract at residues 236 to 265 (EKDSKGSKGAQNPKGARDSKNSKSYGESTD) is disordered.

This sequence belongs to the peptidase T1A family. The 20S proteasome core is composed of 14 alpha and 14 beta subunits that assemble into four stacked heptameric rings, resulting in a barrel-shaped structure. The two inner rings, each composed of seven catalytic beta subunits, are sandwiched by two outer rings, each composed of seven alpha subunits. The catalytic chamber with the active sites is on the inside of the barrel. Has a gated structure, the ends of the cylinder being occluded by the N-termini of the alpha-subunits. Is capped by the proteasome-associated ATPase, ARC.

Its subcellular location is the cytoplasm. It participates in protein degradation; proteasomal Pup-dependent pathway. Its activity is regulated as follows. The formation of the proteasomal ATPase ARC-20S proteasome complex, likely via the docking of the C-termini of ARC into the intersubunit pockets in the alpha-rings, may trigger opening of the gate for substrate entry. Interconversion between the open-gate and close-gate conformations leads to a dynamic regulation of the 20S proteasome proteolysis activity. Functionally, component of the proteasome core, a large protease complex with broad specificity involved in protein degradation. This Mycobacterium leprae (strain Br4923) protein is Proteasome subunit alpha.